The primary structure comprises 179 residues: Large ribosomal subunit protein uL6 (179 aa).

This sequence belongs to the universal ribosomal protein uL6 family. As to quaternary structure, part of the 50S ribosomal subunit.

Its function is as follows. This protein binds to the 23S rRNA, and is important in its secondary structure. It is located near the subunit interface in the base of the L7/L12 stalk, and near the tRNA binding site of the peptidyltransferase center. This chain is Large ribosomal subunit protein uL6, found in Methylacidiphilum infernorum (isolate V4) (Methylokorus infernorum (strain V4)).